A 139-amino-acid polypeptide reads, in one-letter code: Acyl carrier protein 5, chloroplastic (139 aa).

The N-terminal 54 residues, 1-54 (MATSFCSSISMQAPFSATTTRFCLNKQATIFNNEKTNNLSFSLRRLMPARLAVS), are a transit peptide targeting the chloroplast. The region spanning 59-134 (QETVEKVSEI…QAAELIEELV (76 aa)) is the Carrier domain. Residue S94 is modified to O-(pantetheine 4'-phosphoryl)serine.

The protein belongs to the acyl carrier protein (ACP) family. 4'-phosphopantetheine is transferred from CoA to a specific serine of apo-ACP by acpS. This modification is essential for activity because fatty acids are bound in thioester linkage to the sulfhydryl of the prosthetic group.

Its subcellular location is the plastid. The protein localises to the chloroplast. Functionally, carrier of the growing fatty acid chain in fatty acid biosynthesis. This chain is Acyl carrier protein 5, chloroplastic (ACP5), found in Arabidopsis thaliana (Mouse-ear cress).